Here is a 376-residue protein sequence, read N- to C-terminus: Secreted LysM effector LysM9 (376 aa).

The first 25 residues, Met1–Gly25, serve as a signal peptide directing secretion. In terms of domain architecture, LysM spans Ser41 to Leu89. The disordered stretch occupies residues Ser190–Thr219.

This sequence belongs to the secreted LysM effector family.

The protein resides in the secreted. Functionally, secreted LysM effector that might have a role in sequestration of chitin oligosaccharides (breakdown products of fungal cell walls that are released during invasion and act as triggers of host immunity) to dampen host defense. In Penicillium expansum (Blue mold rot fungus), this protein is Secreted LysM effector LysM9.